The primary structure comprises 150 residues: Interferon antagonist OPG027 (150 aa).

This sequence belongs to the orthopoxvirus OPG027 family.

Its function is as follows. Inhibits antiviral activity induced by type I interferons. Does not block signal transduction of IFN, but is important to counteract the host antiviral state induced by a pre-treatment with IFN. This Cynomys gunnisoni (Gunnison's prairie dog) protein is Interferon antagonist OPG027 (OPG027).